A 192-amino-acid chain; its full sequence is MDNQFIFKYSWETLPKKWVKKIEKSEHGNRFDTNTDYLFQLLCFLKLHTYTRFQVLIDICGVDYPSRKRRFEVVYNLLSTRYNSRIRLQTSADEVTRISSVVSLFPSAGWWEREVWDMFGVSFINHPDLRRILTDYGFEGHPLRKDFPLSGYVEVRYDDPEKRVVSEPIEMTQEFRYFDFASPWEQRNGNEG.

This sequence belongs to the complex I 30 kDa subunit family. In terms of assembly, complex I is composed of about 45 different subunits. This is a component of the iron-sulfur (IP) fragment of the enzyme.

The protein localises to the mitochondrion inner membrane. It carries out the reaction a ubiquinone + NADH + 5 H(+)(in) = a ubiquinol + NAD(+) + 4 H(+)(out). Its function is as follows. Core subunit of the mitochondrial membrane respiratory chain NADH dehydrogenase (Complex I) that is believed to belong to the minimal assembly required for catalysis. Complex I functions in the transfer of electrons from NADH to the respiratory chain. The immediate electron acceptor for the enzyme is believed to be ubiquinone. In Beta trigyna (Caucasian wild beet), this protein is NADH dehydrogenase [ubiquinone] iron-sulfur protein 3 (NAD9).